A 158-amino-acid polypeptide reads, in one-letter code: Snaclec convulxin subunit alpha (158 aa).

Residues 1–23 form the signal peptide; it reads MGRFIFVSFGLLVLFLSLSGTGA. 3 disulfide bridges follow: cysteine 27–cysteine 38, cysteine 55–cysteine 152, and cysteine 127–cysteine 144. Positions 34-158 constitute a C-type lectin domain; sequence YDQHCYRIFN…PFVCKFPPQC (125 aa).

It belongs to the snaclec family. In terms of assembly, tetramer of heterodimers of alpha and beta subunits (alphabeta)(4); disulfide-linked. As to expression, expressed by the venom gland.

It localises to the secreted. In terms of biological role, snake venom lectin that activates platelets by binding to the platelet collagen receptor glycoprotein VI (GP6). The indirect activation of integrin alpha-IIb/beta-3 (ITGA2B/ITGB3) also induced by the toxin is upstream the cytoskeletal translocation of GPIb, FcRgamma (FCER1G) and 14-3-3zeta (YWHAZ). The protein is Snaclec convulxin subunit alpha of Crotalus durissus terrificus (South American rattlesnake).